The sequence spans 442 residues: Thymidine phosphorylase (442 aa).

This sequence belongs to the thymidine/pyrimidine-nucleoside phosphorylase family. In terms of assembly, homodimer.

It catalyses the reaction thymidine + phosphate = 2-deoxy-alpha-D-ribose 1-phosphate + thymine. The protein operates within pyrimidine metabolism; dTMP biosynthesis via salvage pathway; dTMP from thymine: step 1/2. Functionally, the enzymes which catalyze the reversible phosphorolysis of pyrimidine nucleosides are involved in the degradation of these compounds and in their utilization as carbon and energy sources, or in the rescue of pyrimidine bases for nucleotide synthesis. This chain is Thymidine phosphorylase, found in Vibrio parahaemolyticus serotype O3:K6 (strain RIMD 2210633).